The following is a 203-amino-acid chain: Probable GTP-binding protein EngB (203 aa).

One can recognise an EngB-type G domain in the interval 21-196; sequence GAPEIAFLGR…WKKIFEAAGT (176 aa). Residues 29–36, 55–59, 79–82, 146–149, and 175–177 contribute to the GTP site; these read GRSNVGKS, GRTQT, DLPG, TKID, and FSA. Residues Ser36 and Thr57 each contribute to the Mg(2+) site.

It belongs to the TRAFAC class TrmE-Era-EngA-EngB-Septin-like GTPase superfamily. EngB GTPase family. Mg(2+) is required as a cofactor.

In terms of biological role, necessary for normal cell division and for the maintenance of normal septation. The chain is Probable GTP-binding protein EngB from Koribacter versatilis (strain Ellin345).